A 176-amino-acid polypeptide reads, in one-letter code: NAD(P)H-quinone oxidoreductase subunit J (176 aa).

It belongs to the complex I 30 kDa subunit family. As to quaternary structure, NDH-1 can be composed of about 15 different subunits; different subcomplexes with different compositions have been identified which probably have different functions.

The protein resides in the cell inner membrane. It carries out the reaction a plastoquinone + NADH + (n+1) H(+)(in) = a plastoquinol + NAD(+) + n H(+)(out). The enzyme catalyses a plastoquinone + NADPH + (n+1) H(+)(in) = a plastoquinol + NADP(+) + n H(+)(out). Functionally, NDH-1 shuttles electrons from an unknown electron donor, via FMN and iron-sulfur (Fe-S) centers, to quinones in the respiratory and/or the photosynthetic chain. The immediate electron acceptor for the enzyme in this species is believed to be plastoquinone. Couples the redox reaction to proton translocation, and thus conserves the redox energy in a proton gradient. Cyanobacterial NDH-1 also plays a role in inorganic carbon-concentration. This is NAD(P)H-quinone oxidoreductase subunit J from Gloeobacter violaceus (strain ATCC 29082 / PCC 7421).